The following is a 548-amino-acid chain: Acetolactate synthase isozyme 2 large subunit (548 aa).

Thiamine diphosphate is bound at residue E47. FAD-binding positions include R149, H251–R272, and D294–D313. A thiamine pyrophosphate binding region spans residues Q377–R457. 2 residues coordinate Mg(2+): D428 and N455.

This sequence belongs to the TPP enzyme family. In terms of assembly, tetramer of two large (IlvG) and two small (IlvM) chains. The cofactor is FAD. It depends on Mg(2+) as a cofactor. Thiamine diphosphate is required as a cofactor.

It carries out the reaction 2 pyruvate + H(+) = (2S)-2-acetolactate + CO2. The protein operates within amino-acid biosynthesis; L-isoleucine biosynthesis; L-isoleucine from 2-oxobutanoate: step 1/4. It participates in amino-acid biosynthesis; L-valine biosynthesis; L-valine from pyruvate: step 1/4. Its activity is regulated as follows. Inhibited by the herbicides chlorimuron ethyl, chlorsulfuron and imazapyr. Functionally, catalyzes the first step in the biosynthesis of branched-chain amino acids. The chain is Acetolactate synthase isozyme 2 large subunit (ilvG) from Escherichia coli (strain K12).